A 205-amino-acid polypeptide reads, in one-letter code: Ephrin-A1 (205 aa).

Positions 1 to 18 are cleaved as a signal peptide; it reads MEFFWASLLGLCCSLAAA. The region spanning 19–151 is the Ephrin RBD domain; sequence NRHTVFWNSS…RLKVMIAGKI (133 aa). The N-linked (GlcNAc...) asparagine glycan is linked to Asn26. 2 cysteine pairs are disulfide-bonded: Cys51/Cys92 and Cys80/Cys140. Ser182 carries GPI-anchor amidated serine lipidation. Residues 183-205 constitute a propeptide, removed in mature form; the sequence is AAPRLFPLAWAVLLLPFLLLQIP.

This sequence belongs to the ephrin family. As to quaternary structure, monomer. Homodimer. Forms heterodimers with EPHA2. Binds to the receptor tyrosine kinases EPHA2, EPHA3, EPHA4, EPHA5, EPHA6 and EPHA7. Also binds with low affinity to EPHA1. Undergoes proteolysis by a metalloprotease to give rise to a soluble monomeric form. Post-translationally, N-Glycosylation is required for binding to EPHA2 receptor and inducing its internalization.

The protein localises to the cell membrane. It is found in the secreted. In terms of biological role, cell surface GPI-bound ligand for Eph receptors, a family of receptor tyrosine kinases which are crucial for migration, repulsion and adhesion during neuronal, vascular and epithelial development. Binds promiscuously Eph receptors residing on adjacent cells, leading to contact-dependent bidirectional signaling into neighboring cells. Plays an important role in angiogenesis and tumor neovascularization. The recruitment of VAV2, VAV3 and PI3-kinase p85 subunit by phosphorylated EPHA2 is critical for EFNA1-induced RAC1 GTPase activation and vascular endothelial cell migration and assembly. Exerts anti-oncogenic effects in tumor cells through activation and down-regulation of EPHA2. Activates EPHA2 by inducing tyrosine phosphorylation which leads to its internalization and degradation. Acts as a negative regulator in the tumorigenesis of gliomas by down-regulating EPHA2 and FAK. Can evoke collapse of embryonic neuronal growth cone and regulates dendritic spine morphogenesis. The chain is Ephrin-A1 (EFNA1) from Bos taurus (Bovine).